The primary structure comprises 336 residues: Glyceraldehyde-3-phosphate dehydrogenase (336 aa).

Residues 12-13 (RI), Asp-34, and Arg-79 each bind NAD(+). Residues 150–152 (SCT), Thr-181, 210–211 (TG), and Arg-233 contribute to the D-glyceraldehyde 3-phosphate site. Catalysis depends on Cys-151, which acts as the Nucleophile. Residue Asn-315 participates in NAD(+) binding.

The protein belongs to the glyceraldehyde-3-phosphate dehydrogenase family. In terms of assembly, homotetramer.

It localises to the cytoplasm. It catalyses the reaction D-glyceraldehyde 3-phosphate + phosphate + NAD(+) = (2R)-3-phospho-glyceroyl phosphate + NADH + H(+). It participates in carbohydrate degradation; glycolysis; pyruvate from D-glyceraldehyde 3-phosphate: step 1/5. The chain is Glyceraldehyde-3-phosphate dehydrogenase (gpdA) from Aspergillus niger.